We begin with the raw amino-acid sequence, 504 residues long: Cytochrome P450 monooxygenase gsfF (504 aa).

The first 16 residues, 1-16 (MTVLFILSAGLVAVFG), serve as a signal peptide directing secretion. N-linked (GlcNAc...) asparagine glycans are attached at residues Asn97 and Asn150. Heme is bound at residue Cys450.

Belongs to the cytochrome P450 family. The cofactor is heme.

It carries out the reaction griseophenone B + reduced [NADPH--hemoprotein reductase] + O2 + H(+) = desmethyl-dehydrogriseofulvin + oxidized [NADPH--hemoprotein reductase] + 2 H2O. It participates in secondary metabolite biosynthesis; terpenoid biosynthesis. Its function is as follows. Cytochrome P450 monooxygenase; part of the gene cluster that mediates the biosynthesis of griseofulvin, an important antifungal drug that has been in use for a long time for treating dermatophyte infections. The first step of the pathway is the formation of the heptaketide backbone by gsfA which is initiated by priming with acetyl-CoA, followed by sequential condensations of 6 malonyl-CoA units. The resulting benzophenone can undergo a spontaneous dehydration to form norlichexanthone. However, the true precursor for the griseofulvin biosynthesis is not norlichexanthone, but the heptaketide benzophenone that is O-methylated at 3-OH by gsfB to produce griseophenone D which is further methylated at 9-OH by gsfC to yield griseophenone C. Griseophenone C is then substrate of halogenase gsfI which is responsible for the regio-specific chlorination at the C13 position to form griseophenone B. The cytochrome P450 gsfF catalyzes the coupling of orcinol and phloroglucinol rings in griseophenone B to form desmethyl-dehydrogriseofulvin A which is further methylated at 5-OH by gsfD to yield dehydrogriseofulvin. Finally, gsfE performs stereospecific reduction of enone 18 of dehydrogriseofulvin to afford the final product griseofulvin. This Penicillium aethiopicum protein is Cytochrome P450 monooxygenase gsfF.